The following is a 145-amino-acid chain: Large ribosomal subunit protein uL16 (145 aa).

Basic residues predominate over residues 1–21 (MLVPTRVKHRKQHRGRMHGKA). Residues 1–22 (MLVPTRVKHRKQHRGRMHGKAT) form a disordered region.

Belongs to the universal ribosomal protein uL16 family. As to quaternary structure, part of the 50S ribosomal subunit.

In terms of biological role, binds 23S rRNA and is also seen to make contacts with the A and possibly P site tRNAs. In Desulfitobacterium hafniense (strain Y51), this protein is Large ribosomal subunit protein uL16.